The chain runs to 818 residues: Beta-glucosidase (818 aa).

Asp222 is an active-site residue. The region spanning 386 to 538 (VFSGEMTVEY…GDAGIAEAVE (153 aa)) is the PA14 domain.

This sequence belongs to the glycosyl hydrolase 3 family.

It is found in the cytoplasm. The catalysed reaction is Hydrolysis of terminal, non-reducing beta-D-glucosyl residues with release of beta-D-glucose.. Involved in modifying a vir-inducing plant signal molecule. Hydrolyzes coniferin but not cellobiose. The polypeptide is Beta-glucosidase (cbg-1) (Rhizobium radiobacter (Agrobacterium tumefaciens)).